The primary structure comprises 106 residues: Large ribosomal subunit protein uL24 (106 aa).

This sequence belongs to the universal ribosomal protein uL24 family. As to quaternary structure, part of the 50S ribosomal subunit.

Functionally, one of two assembly initiator proteins, it binds directly to the 5'-end of the 23S rRNA, where it nucleates assembly of the 50S subunit. One of the proteins that surrounds the polypeptide exit tunnel on the outside of the subunit. The polypeptide is Large ribosomal subunit protein uL24 (Gluconobacter oxydans (strain 621H) (Gluconobacter suboxydans)).